The sequence spans 223 residues: Noggin (223 aa).

The signal sequence occupies residues Met-1–Cys-26. Asn-61 carries N-linked (GlcNAc...) asparagine glycosylation. 4 cysteine pairs are disulfide-bonded: Cys-146–Cys-183, Cys-169–Cys-219, Cys-175–Cys-221, and Cys-198–Cys-206.

This sequence belongs to the noggin family. As to quaternary structure, homodimer.

Its subcellular location is the secreted. In terms of biological role, inhibitor of bone morphogenetic proteins (BMP) signaling. Controls somitogenesis by sequestering the BMP-4 activity which in turn differentiates distinct subtypes of the mesoderm along the mediolateral axis. The polypeptide is Noggin (NOG) (Gallus gallus (Chicken)).